Reading from the N-terminus, the 757-residue chain is Neutral ceramidase 2 (757 aa).

The signal sequence occupies residues 1–25 (MAVSLPLFQFILFLLLLLLSRTVYA). N-linked (GlcNAc...) asparagine glycosylation occurs at N311. The Nucleophile role is filled by S330. N348 and N657 each carry an N-linked (GlcNAc...) asparagine glycan.

Belongs to the neutral ceramidase family.

Its subcellular location is the secreted. The protein resides in the endoplasmic reticulum. It is found in the golgi apparatus. The catalysed reaction is an N-acylsphing-4-enine + H2O = sphing-4-enine + a fatty acid. Its function is as follows. Hydrolyzes the sphingolipid ceramide into sphingosine and free fatty acid. In Arabidopsis thaliana (Mouse-ear cress), this protein is Neutral ceramidase 2.